A 48-amino-acid chain; its full sequence is ATP synthase protein 8 (48 aa).

Residues 16–36 (GFLLMTILLVLFSQFFLPMIL) form a helical membrane-spanning segment.

The protein belongs to the ATPase protein 8 family. As to quaternary structure, F-type ATPases have 2 components, CF(1) - the catalytic core - and CF(0) - the membrane proton channel.

Its subcellular location is the mitochondrion membrane. Its function is as follows. Mitochondrial membrane ATP synthase (F(1)F(0) ATP synthase or Complex V) produces ATP from ADP in the presence of a proton gradient across the membrane which is generated by electron transport complexes of the respiratory chain. F-type ATPases consist of two structural domains, F(1) - containing the extramembraneous catalytic core and F(0) - containing the membrane proton channel, linked together by a central stalk and a peripheral stalk. During catalysis, ATP synthesis in the catalytic domain of F(1) is coupled via a rotary mechanism of the central stalk subunits to proton translocation. Part of the complex F(0) domain. Minor subunit located with subunit a in the membrane. This is ATP synthase protein 8 (ATP8) from Vanderwaltozyma polyspora (strain ATCC 22028 / DSM 70294 / BCRC 21397 / CBS 2163 / NBRC 10782 / NRRL Y-8283 / UCD 57-17) (Kluyveromyces polysporus).